Consider the following 462-residue polypeptide: Semenogelin-1 (462 aa).

The signal sequence occupies residues 1 to 23 (MKPNIIFVLSLLLILEKQAAVMG). A Pyrrolidone carboxylic acid modification is found at Gln-24. The segment at 24 to 61 (QKGGSKGRLPSEFSQFPHGQKGQHYSGQKGKQQTESKG) is disordered. Residues 46–61 (QHYSGQKGKQQTESKG) show a composition bias toward polar residues. Tandem repeats lie at residues 70–129 (HVDA…VVIH), 141–200 (NPSQ…QTEE), and 201–260 (LVAN…QDEL). A repeat-rich region region spans residues 70-439 (HVDANDHDQS…SHGGLDIVII (370 aa)). Disordered stretches follow at residues 131–157 (KGGK…GISS) and 173–194 (KEQT…QSSY). A compositionally biased stretch (polar residues) spans 138-157 (GTQNPSQDQGNSPSGKGISS). The interaction with EPPIN stretch occupies residues 164 to 283 (ERLWVHGLSK…NQDQQHGRKA (120 aa)). A 2 X 60 AA tandem repeats, type 1 region spans residues 261–380 (LVYNKNQHQT…QRSIYSQTEK (120 aa)). Positions 270–432 (TKNLNQDQQH…KGRHQHGSHG (163 aa)) are disordered. 3 stretches are compositionally biased toward polar residues: residues 308 to 317 (DVSQSSIYSQ), 324 to 335 (GKSQKQITIPSQ), and 343 to 352 (ANKISYQSSS). The stretch at 381–439 (LVAGKSQIQAPNPKQEPWHGENAKGESGQSTNREQDLLSHEQKGRHQHGSHGGLDIVII) is one 3-2 repeat. A compositionally biased stretch (basic and acidic residues) spans 413–424 (REQDLLSHEQKG).

This sequence belongs to the semenogelin family. In terms of assembly, occurs in disulfide-linked complexes which may also contain two less abundant 71- and 76-kDa semenogelin-related polypeptides. Interacts with EPPIN (via C-terminus); Cys-239 is a critical amino acid for both binding to EPPIN. In terms of processing, transglutaminase substrate. Post-translationally, rapidly cleaved after ejaculation by KLK3/PSA, resulting in liquefaction of the semen coagulum and the progressive release of motile spermatozoa. As to expression, seminal vesicle.

It is found in the secreted. Predominant protein in semen. It participates in the formation of a gel matrix entrapping the accessory gland secretions and ejaculated spermatozoa. Fragments of semenogelin and/or fragments of the related proteins may contribute to the activation of progressive sperm movements as the gel-forming proteins are fragmented by KLK3/PSA. In terms of biological role, alpha-inhibin-92 and alpha-inhibin-31, derived from the proteolytic degradation of semenogelin, inhibit the secretion of pituitary follicle-stimulating hormone. This Homo sapiens (Human) protein is Semenogelin-1 (SEMG1).